A 462-amino-acid chain; its full sequence is Cysteine--tRNA ligase (462 aa).

Residue C28 coordinates Zn(2+). Residues M30–H40 carry the 'HIGH' region motif. Positions 209, 234, and 238 each coordinate Zn(2+). Residues K266–S270 carry the 'KMSKS' region motif. Residue K269 coordinates ATP.

This sequence belongs to the class-I aminoacyl-tRNA synthetase family. Monomer. Requires Zn(2+) as cofactor.

The protein localises to the cytoplasm. The enzyme catalyses tRNA(Cys) + L-cysteine + ATP = L-cysteinyl-tRNA(Cys) + AMP + diphosphate. This chain is Cysteine--tRNA ligase, found in Alkalilimnicola ehrlichii (strain ATCC BAA-1101 / DSM 17681 / MLHE-1).